The sequence spans 388 residues: Succinate--CoA ligase [ADP-forming] subunit beta (388 aa).

In terms of domain architecture, ATP-grasp spans 9-244 (KQLFAEYGLP…PSQEDSREAH (236 aa)). Residues lysine 46, 53–55 (GRG), glutamate 99, threonine 102, and glutamate 107 contribute to the ATP site. Mg(2+) contacts are provided by asparagine 199 and aspartate 213. Substrate contacts are provided by residues asparagine 264 and 321–323 (GIV).

Belongs to the succinate/malate CoA ligase beta subunit family. In terms of assembly, heterotetramer of two alpha and two beta subunits. Requires Mg(2+) as cofactor.

It carries out the reaction succinate + ATP + CoA = succinyl-CoA + ADP + phosphate. It catalyses the reaction GTP + succinate + CoA = succinyl-CoA + GDP + phosphate. The protein operates within carbohydrate metabolism; tricarboxylic acid cycle; succinate from succinyl-CoA (ligase route): step 1/1. Succinyl-CoA synthetase functions in the citric acid cycle (TCA), coupling the hydrolysis of succinyl-CoA to the synthesis of either ATP or GTP and thus represents the only step of substrate-level phosphorylation in the TCA. The beta subunit provides nucleotide specificity of the enzyme and binds the substrate succinate, while the binding sites for coenzyme A and phosphate are found in the alpha subunit. In Pseudoalteromonas translucida (strain TAC 125), this protein is Succinate--CoA ligase [ADP-forming] subunit beta.